Here is a 260-residue protein sequence, read N- to C-terminus: Acetylglutamate kinase (260 aa).

Substrate is bound by residues 46-47 (GG), arginine 68, and asparagine 160.

It belongs to the acetylglutamate kinase family. ArgB subfamily.

Its subcellular location is the cytoplasm. The enzyme catalyses N-acetyl-L-glutamate + ATP = N-acetyl-L-glutamyl 5-phosphate + ADP. Its pathway is amino-acid biosynthesis; L-arginine biosynthesis; N(2)-acetyl-L-ornithine from L-glutamate: step 2/4. Functionally, catalyzes the ATP-dependent phosphorylation of N-acetyl-L-glutamate. The protein is Acetylglutamate kinase of Shewanella sp. (strain W3-18-1).